The following is a 235-amino-acid chain: Probable inactive serine protease 37 (235 aa).

The signal sequence occupies residues 1–19 (MKFTFCLTVLAGTFFSAHS). The 214-residue stretch at 20 to 233 (SVQKDDPSPY…YVSWIESTTK (214 aa)) folds into the Peptidase S1 domain. 3 cysteine pairs are disulfide-bonded: C40/C56, C131/C198, and C163/C177.

This sequence belongs to the peptidase S1 family.

It is found in the cytoplasmic vesicle. Its subcellular location is the secretory vesicle. The protein localises to the acrosome. The protein resides in the secreted. Plays a role in male fertility. May have a role in sperm migration or binding to zona-intact eggs. Involved in the activation of the proacrosin/acrosin system. The protein is Probable inactive serine protease 37 of Bos taurus (Bovine).